The chain runs to 128 residues: Fluoride-specific ion channel FluC (128 aa).

4 consecutive transmembrane segments (helical) span residues 5–25 (IVAIFVGAGLGALLRWFLSLA), 35–55 (LGTLASNLIGGYVIGVAAVVF), 67–87 (LFVITGFLGGLTTFSTYSVEV), and 96–116 (FGWALAVAALHLTGSFALTAL). Na(+) contacts are provided by G75 and T78.

The protein belongs to the fluoride channel Fluc/FEX (TC 1.A.43) family.

Its subcellular location is the cell inner membrane. It catalyses the reaction fluoride(in) = fluoride(out). Its activity is regulated as follows. Na(+) is not transported, but it plays an essential structural role and its presence is essential for fluoride channel function. In terms of biological role, fluoride-specific ion channel. Important for reducing fluoride concentration in the cell, thus reducing its toxicity. This chain is Fluoride-specific ion channel FluC, found in Burkholderia cenocepacia (strain HI2424).